The primary structure comprises 109 residues: Large ribosomal subunit protein uL24 (109 aa).

This sequence belongs to the universal ribosomal protein uL24 family. As to quaternary structure, part of the 50S ribosomal subunit.

One of two assembly initiator proteins, it binds directly to the 5'-end of the 23S rRNA, where it nucleates assembly of the 50S subunit. Its function is as follows. One of the proteins that surrounds the polypeptide exit tunnel on the outside of the subunit. The sequence is that of Large ribosomal subunit protein uL24 from Legionella pneumophila (strain Corby).